The following is a 79-amino-acid chain: Cytochrome b (79 aa).

Helical transmembrane passes span 1 to 7 (TALFLAM), 31 to 52 (WLIR…YLHI), and 67 to 79 (WNVG…LTMM). 2 residues coordinate heme b: H37 and H51.

The protein belongs to the cytochrome b family. In terms of assembly, the cytochrome bc1 complex contains 3 respiratory subunits (MT-CYB, CYC1 and UQCRFS1), 2 core proteins (UQCRC1 and UQCRC2) and probably 6 low-molecular weight proteins. It depends on heme b as a cofactor.

Its subcellular location is the mitochondrion inner membrane. In terms of biological role, component of the ubiquinol-cytochrome c reductase complex (complex III or cytochrome b-c1 complex) that is part of the mitochondrial respiratory chain. The b-c1 complex mediates electron transfer from ubiquinol to cytochrome c. Contributes to the generation of a proton gradient across the mitochondrial membrane that is then used for ATP synthesis. The polypeptide is Cytochrome b (mt-cyb) (Amphilophus citrinellus (Midas cichlid)).